A 494-amino-acid chain; its full sequence is Apolipoprotein N-acyltransferase (494 aa).

A run of 6 helical transmembrane segments spans residues 16-36 (TVGG…FIWI), 41-61 (LWAS…AILL), 62-82 (SYRW…IAFS), 133-153 (LIWG…FGLG), 173-193 (GGLA…IFAF), and 202-222 (LFAL…ILLA). A CN hydrolase domain is found at 235-461 (WQTNIPTRQK…EGVGVIDINV (227 aa)). The active-site Proton acceptor is Glu-276. Residue Lys-325 is part of the active site. Catalysis depends on Cys-373, which acts as the Nucleophile. A helical membrane pass occupies residues 468–488 (YVRWGEIPLISSLLIVLCFIA).

This sequence belongs to the CN hydrolase family. Apolipoprotein N-acyltransferase subfamily.

The protein resides in the cell inner membrane. It catalyses the reaction N-terminal S-1,2-diacyl-sn-glyceryl-L-cysteinyl-[lipoprotein] + a glycerophospholipid = N-acyl-S-1,2-diacyl-sn-glyceryl-L-cysteinyl-[lipoprotein] + a 2-acyl-sn-glycero-3-phospholipid + H(+). The protein operates within protein modification; lipoprotein biosynthesis (N-acyl transfer). Its function is as follows. Catalyzes the phospholipid dependent N-acylation of the N-terminal cysteine of apolipoprotein, the last step in lipoprotein maturation. The protein is Apolipoprotein N-acyltransferase of Prochlorococcus marinus (strain SARG / CCMP1375 / SS120).